Consider the following 169-residue polypeptide: Putative tRNA (cytidine(34)-2'-O)-methyltransferase (169 aa).

Residues isoleucine 79, glycine 104, isoleucine 125, and serine 133 each coordinate S-adenosyl-L-methionine.

The protein belongs to the class IV-like SAM-binding methyltransferase superfamily. RNA methyltransferase TrmH family. TrmL subfamily.

The protein resides in the cytoplasm. The enzyme catalyses cytidine(34) in tRNA + S-adenosyl-L-methionine = 2'-O-methylcytidine(34) in tRNA + S-adenosyl-L-homocysteine + H(+). It carries out the reaction 5-carboxymethylaminomethyluridine(34) in tRNA(Leu) + S-adenosyl-L-methionine = 5-carboxymethylaminomethyl-2'-O-methyluridine(34) in tRNA(Leu) + S-adenosyl-L-homocysteine + H(+). Its function is as follows. Could methylate the ribose at the nucleotide 34 wobble position in tRNA. This Listeria monocytogenes serotype 4b (strain F2365) protein is Putative tRNA (cytidine(34)-2'-O)-methyltransferase.